The primary structure comprises 855 residues: Potassium channel AKT2 (855 aa).

Low complexity predominate over residues 1–12; it reads MKTSSFESASSS. The segment at 1–24 is disordered; sequence MKTSSFESASSSGGSGGGGGGGGG. Residues 1 to 75 are Cytoplasmic-facing; sequence MKTSSFESAS…PLDSRYRCWD (75 aa). Gly residues predominate over residues 13–24; sequence GGSGGGGGGGGG. Residues 76–96 form a helical membrane-spanning segment; it reads TFMVVLVAYSAWVYPFEVAFM. Topologically, residues 97–105 are extracellular; sequence NASPKGGLE. The helical transmembrane segment at 106–126 threads the bilayer; sequence VADIVVDLFFAVDIVLTFFVA. Residues 127–149 lie on the Cytoplasmic side of the membrane; it reads YIDSRTQLLVRDRRRIATRYLST. A helical transmembrane segment spans residues 150 to 170; that stretch reads FFIMDVASTIPFQGLAYIVTG. Topologically, residues 171–179 are extracellular; it reads EVRESPAFS. Residues 180-200 form a helical; Voltage-sensor membrane-spanning segment; it reads LLGILRLWRLRKVKQFFTRLE. Residues 201–214 lie on the Cytoplasmic side of the membrane; sequence KDIRFNYFWIRCAR. The helical transmembrane segment at 215 to 235 threads the bilayer; the sequence is LIAVTLFLVHCAGCLYYLIAD. Over 236-262 the chain is Extracellular; the sequence is RYPHREKTWIGAVIPDFQEASLWIRYT. Positions 263 to 282 form an intramembrane region, pore-forming; sequence SSVYWSITTMTTVGYGDMHA. The Extracellular portion of the chain corresponds to 283 to 285; it reads QNT. A helical transmembrane segment spans residues 286-306; the sequence is VEMIFNIFYMLFNLGLTAYLI. Over 307–855 the chain is Cytoplasmic; sequence GNMTNLVVEG…VASMDSVSGS (549 aa). Residue 391-511 coordinates a nucleoside 3',5'-cyclic phosphate; it reads LFKGVSREVL…VVIIKNFLKH (121 aa). ANK repeat units follow at residues 536–565, 569–598, 602–631, 634–663, and 667–696; these read NIPC…DPDV, KGRT…NVNI, QGNT…VSSP, AAGD…AVDS, and DGAT…SVDR. The tract at residues 744-765 is disordered; the sequence is EVGSSGDSRNGRRQSARSDGAH. Residues 768–855 form the KHA domain; sequence RVSIYRGHPF…VASMDSVSGS (88 aa).

The protein belongs to the potassium channel family. Plant (TC 1.A.1.4) subfamily. The potassium channel is probably a homo- or heterotetrameric complex of pore-forming subunits.

Its subcellular location is the membrane. Probable inward-rectifying potassium channel. Assuming opened or closed conformations in response to the voltage difference across the membrane, the channel is activated by hyperpolarization. The sequence is that of Potassium channel AKT2 from Oryza sativa subsp. japonica (Rice).